We begin with the raw amino-acid sequence, 323 residues long: Prenyl transferase (323 aa).

Residues Lys-46, Arg-49, and His-81 each coordinate isopentenyl diphosphate. Asp-88 and Asp-92 together coordinate Mg(2+). An all-trans-polyprenyl diphosphate is bound at residue Arg-97. Arg-98 contacts isopentenyl diphosphate. The an all-trans-polyprenyl diphosphate site is built by Lys-174, Thr-175, and Gln-212.

Belongs to the FPP/GGPP synthase family. It depends on Mg(2+) as a cofactor.

The protein resides in the plastid. The protein localises to the cyanelle. Functionally, possible role in synthesis of the nonaprenyl side chain of plastoquinone or in synthesis of other prenyl chains such as undekaprenyl pyrophosphate. The polypeptide is Prenyl transferase (preA) (Cyanophora paradoxa).